The following is a 492-amino-acid chain: Phenylalanine--tRNA ligase alpha subunit (492 aa).

L-phenylalanine is bound by residues threonine 335, glutamine 374–glutamate 376, and tyrosine 414. Glutamate 416 contributes to the Mg(2+) binding site. Position 439 (phenylalanine 439) interacts with L-phenylalanine.

This sequence belongs to the class-II aminoacyl-tRNA synthetase family. Phe-tRNA synthetase alpha subunit type 2 subfamily. Tetramer of two alpha and two beta subunits. Mg(2+) serves as cofactor.

The protein resides in the cytoplasm. The catalysed reaction is tRNA(Phe) + L-phenylalanine + ATP = L-phenylalanyl-tRNA(Phe) + AMP + diphosphate + H(+). The polypeptide is Phenylalanine--tRNA ligase alpha subunit (Methanosarcina acetivorans (strain ATCC 35395 / DSM 2834 / JCM 12185 / C2A)).